We begin with the raw amino-acid sequence, 275 residues long: MQTIDSSSSAATTETLQIGHRQFQSRLMTGTGKYDDFETMRRSIAASGCEIVTVAVRRVQTNAPGHQGLAEAVDWNKVWMLPNTAGCQTAEEAVRVARLGREMAKLLGQEDNNFIKLEVIPDSKYLLPDPIGTLEAAEQLVKEGFAVLPYINADPLLAKRLEEVGCATVMPLGSPIGSGQGIKNMANIQIIIENATVPVVVDAGIGSPSEAAQAMEMGADAVLINTAIAKAQDPVMMATAMGMATQAGRFAYQSGRIPVKAYASASSPLAGRISS.

The active-site Schiff-base intermediate with DXP is K116. 1-deoxy-D-xylulose 5-phosphate contacts are provided by residues G177, 203–204, and 225–226; these read AG and NT.

Belongs to the ThiG family. In terms of assembly, homotetramer. Forms heterodimers with either ThiH or ThiS.

Its subcellular location is the cytoplasm. The catalysed reaction is [ThiS sulfur-carrier protein]-C-terminal-Gly-aminoethanethioate + 2-iminoacetate + 1-deoxy-D-xylulose 5-phosphate = [ThiS sulfur-carrier protein]-C-terminal Gly-Gly + 2-[(2R,5Z)-2-carboxy-4-methylthiazol-5(2H)-ylidene]ethyl phosphate + 2 H2O + H(+). It participates in cofactor biosynthesis; thiamine diphosphate biosynthesis. Functionally, catalyzes the rearrangement of 1-deoxy-D-xylulose 5-phosphate (DXP) to produce the thiazole phosphate moiety of thiamine. Sulfur is provided by the thiocarboxylate moiety of the carrier protein ThiS. In vitro, sulfur can be provided by H(2)S. This is Thiazole synthase from Acaryochloris marina (strain MBIC 11017).